The sequence spans 488 residues: Glutamyl-tRNA(Gln) amidotransferase subunit A (488 aa).

Active-site charge relay system residues include lysine 77 and serine 152. The Acyl-ester intermediate role is filled by serine 176.

This sequence belongs to the amidase family. GatA subfamily. Heterotrimer of A, B and C subunits.

It catalyses the reaction L-glutamyl-tRNA(Gln) + L-glutamine + ATP + H2O = L-glutaminyl-tRNA(Gln) + L-glutamate + ADP + phosphate + H(+). Functionally, allows the formation of correctly charged Gln-tRNA(Gln) through the transamidation of misacylated Glu-tRNA(Gln) in organisms which lack glutaminyl-tRNA synthetase. The reaction takes place in the presence of glutamine and ATP through an activated gamma-phospho-Glu-tRNA(Gln). The chain is Glutamyl-tRNA(Gln) amidotransferase subunit A from Streptococcus pyogenes serotype M18 (strain MGAS8232).